Consider the following 239-residue polypeptide: Sugar fermentation stimulation protein homolog (239 aa).

This sequence belongs to the SfsA family.

The chain is Sugar fermentation stimulation protein homolog from Synechococcus sp. (strain JA-3-3Ab) (Cyanobacteria bacterium Yellowstone A-Prime).